Here is a 111-residue protein sequence, read N- to C-terminus: Entry-fusion complex protein OPG086 (111 aa).

Residues 1–21 (MASLLYLILFLLFVCISYYFT) traverse the membrane as a helical; Signal-anchor segment. Residues 22 to 111 (YYPTNKLQAA…TLLPILLLSK (90 aa)) lie on the Virion surface side of the membrane.

Belongs to the orthopoxvirus OPG086 family. Interacts with OPG099/L5. Component of the entry fusion complex (EFC) composed of OPG053, OPG076, OPG086, OPG094, OPG095, OPG099, OPG107, OPG143, OPG104, OPG147 and OPG155. Except for OPG095 and OPG053, each of the EFC proteins is required for assembly or stability of the complex. Unglycosylated because produced in viral factories instead of the classic ER -Golgi route.

It localises to the virion membrane. Its function is as follows. Component of the entry fusion complex (EFC), which consists of 11 proteins. During cell infection, this complex mediates entry of the virion core into the host cytoplasm by a two-step mechanism consisting of lipid mixing of the viral and cellular membranes and subsequent pore formation. The protein is Entry-fusion complex protein OPG086 (OPG086) of Vaccinia virus (strain Copenhagen) (VACV).